A 309-amino-acid chain; its full sequence is Enoyl-CoA hydratase 2, peroxisomal (309 aa).

Substrate is bound by residues 95–96 (HG), K124, 208–213 (DYNPLH), G231, and F261. One can recognise a MaoC-like domain in the interval 183–295 (PQRQPLTVCE…TKVKERNKTV (113 aa)). Residues 307-309 (SSL) carry the Microbody targeting signal motif.

Ubiquitous.

It is found in the peroxisome. The enzyme catalyses a (3R)-3-hydroxyacyl-CoA = a (2E)-enoyl-CoA + H2O. It participates in lipid metabolism; fatty acid beta-oxidation. Its function is as follows. Bidirectional monofunctional enoyl-CoA hydratase 2 involved in the degradation of even cis-unsaturated fatty acids. Devoid of 3-hydroxyacyl-CoA dehydrogenase activity. The sequence is that of Enoyl-CoA hydratase 2, peroxisomal (ECH2) from Arabidopsis thaliana (Mouse-ear cress).